The following is a 400-amino-acid chain: Endoplasmin (400 aa).

An N6-succinyllysine modification is found at Lys1. N-linked (GlcNAc...) asparagine glycosylation occurs at Asn42. Ser44 is subject to Phosphoserine. At Lys76 the chain carries N6-acetyllysine. N-linked (GlcNAc...) asparagine glycosylation is found at Asn78 and Asn99. Lys230 is subject to N6-succinyllysine. The segment at 346–400 (IDPEAQVEEEPEEEPEDTTEDTEQDEEEEVDAGTEEEEEEEQETAKESTAEKDEL) is disordered. Residues 350-387 (AQVEEEPEEEPEDTTEDTEQDEEEEVDAGTEEEEEEEQ) show a composition bias toward acidic residues. At Thr379 the chain carries Phosphothreonine. Basic and acidic residues predominate over residues 388 to 400 (ETAKESTAEKDEL). The Prevents secretion from ER motif lies at 397 to 400 (KDEL).

Belongs to the heat shock protein 90 family. Homodimer; disulfide-linked. Component of an EIF2 complex at least composed of CELF1/CUGBP1, CALR, CALR3, EIF2S1, EIF2S2, HSP90B1 and HSPA5. Part of a large chaperone multiprotein complex comprising DNAJB11, HSP90B1, HSPA5, HYOU, PDIA2, PDIA4, PDIA6, PPIB, SDF2L1, UGGT1 and very small amounts of ERP29, but not, or at very low levels, CALR nor CANX. Interacts with AIMP1; regulates its retention in the endoplasmic reticulum. Hyperglycosylated form interacts with OS9; promoting its degradation by the endoplasmic reticulum associated degradation (ERAD). Interacts with CNPY3. This interaction is disrupted in the presence of ATP. Interacts with TLR4 and TLR9, but not with TLR3. Interacts with MZB1 in a calcium-dependent manner. Interacts with METTL23. Interacts with IL1B; the interaction facilitates cargo translocation into the ERGIC. Interacts with EIF2AK3. In terms of processing, phosphorylated by CK2. Post-translationally, N-glycosylated cotranslationally at Asn-217 by STT3A-containing OST-A complex: this glycosylation is constitutive. In response to various stress, 5 additional facultative sites (Asn-62, Asn-107, Asn-445, Asn-481 and Asn-502) can be glycosylated post-translationally by STT3B-containing OST-B complex, leading to a hyperglycosylated form that is degraded by the ER-associated degradation (ERAD) pathway. In normal conditions, the OST-A complex together with CCDC134 prevent glycosylation at facultative sites during protein folding, thereby preventing hyperglycosylation. Mechanistically, nascent HSP90B1 is tethered during translation to a specialized CCDC134-containing translocon that forms a microenvironment for its folding, in which STT3A associates with the SRT pseudosubstrate motif, and prevents access to facultative glycosylation sites until folding is completed, rendering its facultative sites inaccessible to the OST-B complex.

It localises to the endoplasmic reticulum lumen. It is found in the sarcoplasmic reticulum lumen. Its subcellular location is the melanosome. The enzyme catalyses ATP + H2O = ADP + phosphate + H(+). Functionally, ATP-dependent chaperone involved in the processing of proteins in the endoplasmic reticulum, regulating their transport. Together with MESD, acts as a modulator of the Wnt pathway by promoting the folding of LRP6, a coreceptor of the canonical Wnt pathway. When associated with CNPY3, required for proper folding of Toll-like receptors. Promotes folding and trafficking of TLR4 to the cell surface. May participate in the unfolding of cytosolic leaderless cargos (lacking the secretion signal sequence) such as the interleukin 1/IL-1 to facilitate their translocation into the ERGIC (endoplasmic reticulum-Golgi intermediate compartment) and secretion; the translocation process is mediated by the cargo receptor TMED10. This is Endoplasmin (HSP90B1) from Mesocricetus auratus (Golden hamster).